Consider the following 406-residue polypeptide: 2-epi-valiolone synthase (406 aa).

Positions 1-21 are disordered; the sequence is MPSTGSTPILAHDVKSPHRGS. Residues 105–108, 137–141, 161–162, Lys-174, Lys-183, and 201–204 contribute to the NAD(+) site; these read EPSK, GVLCD, TS, and CLAT. Glu-216, His-287, and His-304 together coordinate Zn(2+).

Belongs to the sugar phosphate cyclases superfamily. EVS family. NAD(+) serves as cofactor. The cofactor is Co(2+). It depends on Zn(2+) as a cofactor.

It carries out the reaction D-sedoheptulose 7-phosphate = 2-epi-valiolone + phosphate. Catalyzes the conversion of sedoheptulose 7-phosphate to 2-epi-valiolone, which may serve as an alternative precursor for aminocyclitol biosynthesis. This Stigmatella aurantiaca (strain DW4/3-1) protein is 2-epi-valiolone synthase.